Here is a 177-residue protein sequence, read N- to C-terminus: uncharacterized protein (177 aa).

This is an uncharacterized protein from Treponema pallidum (strain Nichols).